We begin with the raw amino-acid sequence, 146 residues long: Neutral phospholipase A2 B (146 aa).

The signal sequence occupies residues 1-21; it reads MNPAHLLILAAVCVSPLGASS. A propeptide spanning residues 22-27 is cleaved from the precursor; sequence NRPMPL. Intrachain disulfides connect Cys-38–Cys-98, Cys-53–Cys-145, Cys-55–Cys-71, Cys-70–Cys-126, Cys-77–Cys-119, Cys-87–Cys-112, and Cys-105–Cys-117. Ca(2+) is bound by residues Tyr-54, Gly-56, and Gly-58. His-74 is an active-site residue. Residue Asp-75 participates in Ca(2+) binding. The active site involves Asp-120.

Belongs to the phospholipase A2 family. Group I subfamily. D49 sub-subfamily. It depends on Ca(2+) as a cofactor. Expressed by the venom gland.

The protein resides in the secreted. The enzyme catalyses a 1,2-diacyl-sn-glycero-3-phosphocholine + H2O = a 1-acyl-sn-glycero-3-phosphocholine + a fatty acid + H(+). PLA2 catalyzes the calcium-dependent hydrolysis of the 2-acyl groups in 3-sn-phosphoglycerides. The chain is Neutral phospholipase A2 B from Naja sputatrix (Malayan spitting cobra).